Here is a 224-residue protein sequence, read N- to C-terminus: Myogenin (224 aa).

Serine 77 and serine 79 each carry phosphoserine; by CaMK2G. The 52-residue stretch at 81 to 132 folds into the bHLH domain; the sequence is DRRRAATLREKRRLKKVNEAFEALKRSTLLNPNQRLPKVEILRSAIQYIERL. The residue at position 87 (threonine 87) is a Phosphothreonine; by CaMK2G.

In terms of assembly, homodimer and heterodimer with E12; heterodimerization enhances MYOG DNA-binding and transcriptional activities. Interacts with SMARCA4/BRG1/BAF190A. Interacts (via C-terminal region) with SSRP1 and SUPT16H; the interaction is indicative of an interaction with the FACT complex. Interacts with CSRP3. In terms of processing, phosphorylated by CAMK2G on threonine and serine amino acids in a muscle activity-dependent manner. Phosphorylation of Thr-87 impairs both DNA-binding and trans-activation functions in contracting muscles.

The protein localises to the nucleus. Functionally, acts as a transcriptional activator that promotes transcription of muscle-specific target genes and plays a role in muscle differentiation, cell cycle exit and muscle atrophy. Essential for the development of functional embryonic skeletal fiber muscle differentiation. However is dispensable for postnatal skeletal muscle growth; phosphorylation by CAMK2G inhibits its transcriptional activity in respons to muscle activity. Required for the recruitment of the FACT complex to muscle-specific promoter regions, thus promoting gene expression initiation. During terminal myoblast differentiation, plays a role as a strong activator of transcription at loci with an open chromatin structure previously initiated by MYOD1. Together with MYF5 and MYOD1, co-occupies muscle-specific gene promoter core regions during myogenesis. Also cooperates with myocyte-specific enhancer factor MEF2D and BRG1-dependent recruitment of SWI/SNF chromatin-remodeling enzymes to alter chromatin structure at myogenic late gene promoters. Facilitates cell cycle exit during terminal muscle differentiation through the up-regulation of miR-20a expression, which in turn represses genes involved in cell cycle progression. Binds to the E-box containing (E1) promoter region of the miR-20a gene. Also plays a role in preventing reversal of muscle cell differentiation. Contributes to the atrophy-related gene expression in adult denervated muscles. Induces fibroblasts to differentiate into myoblasts. The protein is Myogenin (MYOG) of Bos taurus (Bovine).